Consider the following 452-residue polypeptide: Glycine receptor subunit alpha-2 (452 aa).

Positions 1–27 are cleaved as a signal peptide; that stretch reads MNRQLVNILTALFAFFLGTNHFREAFC. Over 28–256 the chain is Extracellular; the sequence is KDHDSRSGKH…KFHLERQMGY (229 aa). An N-linked (GlcNAc...) asparagine glycan is attached at Asn-72. Arg-99 contacts glycine. Arg-99 is a binding site for strychnine. An N-linked (GlcNAc...) asparagine glycan is attached at Asn-103. Ser-163 serves as a coordination point for glycine. Cys-172 and Cys-186 are oxidised to a cystine. Zn(2+) is bound by residues Glu-226 and Glu-228. A disulfide bridge connects residues Cys-232 and Cys-243. Glycine is bound at residue Thr-238. His-249 contacts Zn(2+). A helical membrane pass occupies residues 257–278; that stretch reads YLIQMYIPSLLIVILSWVSFWI. The Cytoplasmic portion of the chain corresponds to 279-283; the sequence is NMDAA. A helical transmembrane segment spans residues 284–304; the sequence is PARVALGITTVLTMTTQSSGS. At 305 to 315 the chain is on the extracellular side; the sequence is RASLPKVSYVK. The helical transmembrane segment at 316–336 threads the bilayer; it reads AIDIWMAVCLLFVFAALLEYA. Residues 337 to 420 lie on the Cytoplasmic side of the membrane; sequence AVNFVSRQHK…FVDRAKRIDT (84 aa). The helical transmembrane segment at 421–441 threads the bilayer; the sequence is ISRAAFPLAFLIFNIFYWITY. The Extracellular segment spans residues 442–452; sequence KIIRHEDVHKK.

This sequence belongs to the ligand-gated ion channel (TC 1.A.9) family. Glycine receptor (TC 1.A.9.3) subfamily. GLRA2 sub-subfamily. In terms of assembly, interacts with GLRB. Heteropentamer composed of GLRA2 and GLRB; functional GLRB-GLRA2 heteropentamers contain four GLRA2 subunits and one GLRB subunit, although alternative subunit composition cannot be excluded. Homopentamer (in vitro). Both homopentamers and heteropentamers form functional ion channels, but their characteristics are subtly different.

Its subcellular location is the postsynaptic cell membrane. It localises to the synapse. The protein localises to the cell membrane. The protein resides in the cell projection. The enzyme catalyses chloride(in) = chloride(out). Its activity is regulated as follows. Channel opening is triggered by extracellular glycine. Channel opening is also triggered by taurine and beta-alanine. Inhibited by strychnine. Inhibited by picrotoxin. Functionally, subunit of heteromeric glycine-gated chloride channels. Plays a role in synaptic plasticity. Contributes to the generation of inhibitory postsynaptic currents, and is involved in the down-regulation of neuronal excitability. Plays a role in cellular responses to ethanol. The sequence is that of Glycine receptor subunit alpha-2 from Rattus norvegicus (Rat).